Consider the following 233-residue polypeptide: 2,3-bisphosphoglycerate-dependent phosphoglycerate mutase (233 aa).

Residues 8–15, 21–22, R60, 116–119, K127, 143–144, and 187–188 each bind substrate; these read RHGQSLWN, TG, ERYY, RR, and GN. Catalysis depends on H9, which acts as the Tele-phosphohistidine intermediate. Catalysis depends on E116, which acts as the Proton donor/acceptor.

It belongs to the phosphoglycerate mutase family. BPG-dependent PGAM subfamily.

It carries out the reaction (2R)-2-phosphoglycerate = (2R)-3-phosphoglycerate. It participates in carbohydrate degradation; glycolysis; pyruvate from D-glyceraldehyde 3-phosphate: step 3/5. In terms of biological role, catalyzes the interconversion of 2-phosphoglycerate and 3-phosphoglycerate. This is 2,3-bisphosphoglycerate-dependent phosphoglycerate mutase from Gloeothece citriformis (strain PCC 7424) (Cyanothece sp. (strain PCC 7424)).